Here is a 142-residue protein sequence, read N- to C-terminus: uncharacterized protein (142 aa).

An N-acetyltransferase domain is found at 1-120 (MADKFDANDE…TILKWEKNMD (120 aa)).

This sequence belongs to the acetyltransferase family.

This is an uncharacterized protein from Streptococcus pyogenes serotype M1.